A 171-amino-acid chain; its full sequence is Adenine phosphoribosyltransferase (171 aa).

Belongs to the purine/pyrimidine phosphoribosyltransferase family. In terms of assembly, homodimer.

The protein resides in the cytoplasm. It carries out the reaction AMP + diphosphate = 5-phospho-alpha-D-ribose 1-diphosphate + adenine. Its pathway is purine metabolism; AMP biosynthesis via salvage pathway; AMP from adenine: step 1/1. Catalyzes a salvage reaction resulting in the formation of AMP, that is energically less costly than de novo synthesis. The sequence is that of Adenine phosphoribosyltransferase from Acidiphilium cryptum (strain JF-5).